The sequence spans 295 residues: Probable endonuclease 4 (295 aa).

Residues His78, His118, Glu154, Asp188, His191, His225, Asp238, His240, and Glu270 each coordinate Zn(2+).

The protein belongs to the AP endonuclease 2 family. Requires Zn(2+) as cofactor.

It carries out the reaction Endonucleolytic cleavage to 5'-phosphooligonucleotide end-products.. Functionally, endonuclease IV plays a role in DNA repair. It cleaves phosphodiester bonds at apurinic or apyrimidinic (AP) sites, generating a 3'-hydroxyl group and a 5'-terminal sugar phosphate. The sequence is that of Probable endonuclease 4 from Vibrio campbellii (strain ATCC BAA-1116).